Consider the following 394-residue polypeptide: Elongation factor Tu (394 aa).

The 195-residue stretch at 10-204 (KPHVNVGTIG…HLDTYIPEPE (195 aa)) folds into the tr-type G domain. Residues 19-26 (GHVDHGKT) form a G1 region. Residue 19–26 (GHVDHGKT) coordinates GTP. Residue Thr-26 participates in Mg(2+) binding. The segment at 60–64 (GITIN) is G2. Residues 81–84 (DCPG) are G3. Residues 81–85 (DCPGH) and 136–139 (NKCD) each bind GTP. The tract at residues 136 to 139 (NKCD) is G4. The interval 174–176 (SAL) is G5.

The protein belongs to the TRAFAC class translation factor GTPase superfamily. Classic translation factor GTPase family. EF-Tu/EF-1A subfamily. As to quaternary structure, monomer.

The protein localises to the cytoplasm. The enzyme catalyses GTP + H2O = GDP + phosphate + H(+). GTP hydrolase that promotes the GTP-dependent binding of aminoacyl-tRNA to the A-site of ribosomes during protein biosynthesis. The polypeptide is Elongation factor Tu (Actinobacillus pleuropneumoniae serotype 5b (strain L20)).